Consider the following 198-residue polypeptide: Carnitine operon protein CaiE (198 aa).

A disordered region spans residues 174–198 (KPLTQAEENRPRLKGTTDVKPKSAQ). Over residues 180–198 (EENRPRLKGTTDVKPKSAQ) the composition is skewed to basic and acidic residues.

Belongs to the transferase hexapeptide repeat family.

It functions in the pathway amine and polyamine metabolism; carnitine metabolism. In terms of biological role, overproduction of CaiE stimulates the activity of CaiB and CaiD. The protein is Carnitine operon protein CaiE of Salmonella dublin (strain CT_02021853).